The sequence spans 35 residues: Somatostatin (35 aa).

Residues cysteine 24 and cysteine 35 are joined by a disulfide bond.

It belongs to the somatostatin family.

It localises to the secreted. Its function is as follows. Somatostatin inhibits the release of somatotropin. This Lampetra fluviatilis (European river lamprey) protein is Somatostatin (sst).